Consider the following 116-residue polypeptide: UPF0342 protein lhv_1666 (116 aa).

Belongs to the UPF0342 family.

The polypeptide is UPF0342 protein lhv_1666 (Lactobacillus helveticus (strain DPC 4571)).